Consider the following 495-residue polypeptide: GTPase Der (495 aa).

EngA-type G domains follow at residues P3 to E166 and I208 to T381. GTP contacts are provided by residues G9 to S16, D56 to I60, N118 to D121, G214 to S221, D261 to V265, and N326 to D329. A KH-like domain is found at K382–E466.

This sequence belongs to the TRAFAC class TrmE-Era-EngA-EngB-Septin-like GTPase superfamily. EngA (Der) GTPase family. In terms of assembly, associates with the 50S ribosomal subunit.

Functionally, GTPase that plays an essential role in the late steps of ribosome biogenesis. The polypeptide is GTPase Der (Yersinia pseudotuberculosis serotype IB (strain PB1/+)).